The chain runs to 421 residues: Enolase 1 (421 aa).

Gln-164 provides a ligand contact to (2R)-2-phosphoglycerate. Glu-206 (proton donor) is an active-site residue. Mg(2+) is bound by residues Asp-243, Glu-287, and Asp-314. (2R)-2-phosphoglycerate-binding residues include Lys-339, Arg-368, Ser-369, and Lys-390. Residue Lys-339 is the Proton acceptor of the active site.

The protein belongs to the enolase family. In terms of assembly, component of the RNA degradosome, a multiprotein complex involved in RNA processing and mRNA degradation. Mg(2+) serves as cofactor.

The protein resides in the cytoplasm. It localises to the secreted. The protein localises to the cell surface. The catalysed reaction is (2R)-2-phosphoglycerate = phosphoenolpyruvate + H2O. It participates in carbohydrate degradation; glycolysis; pyruvate from D-glyceraldehyde 3-phosphate: step 4/5. Functionally, catalyzes the reversible conversion of 2-phosphoglycerate (2-PG) into phosphoenolpyruvate (PEP). It is essential for the degradation of carbohydrates via glycolysis. The chain is Enolase 1 from Methylococcus capsulatus (strain ATCC 33009 / NCIMB 11132 / Bath).